Consider the following 385-residue polypeptide: Leucine aminopeptidase 1 (385 aa).

The first 14 residues, 1-14, serve as a signal peptide directing secretion; the sequence is MKFLTLALSATATA. Residues 15 to 85 constitute a propeptide that is removed on maturation; it reads MIIVNPEQQP…YGTLHTTRVV (71 aa). Zn(2+) contacts are provided by His-185, Asp-204, Glu-243, and Asp-270. Cys-319 and Cys-323 are joined by a disulfide. His-352 contributes to the Zn(2+) binding site.

It belongs to the peptidase M28 family. M28E subfamily. As to quaternary structure, monomer. Zn(2+) serves as cofactor.

It is found in the secreted. Functionally, extracellular aminopeptidase that allows assimilation of proteinaceous substrates. The polypeptide is Leucine aminopeptidase 1 (lap1) (Penicillium rubens (strain ATCC 28089 / DSM 1075 / NRRL 1951 / Wisconsin 54-1255) (Penicillium chrysogenum)).